We begin with the raw amino-acid sequence, 525 residues long: GMP synthase [glutamine-hydrolyzing] (525 aa).

Residues 9-207 (RILILDFGSQ…VLDICQCEAL (199 aa)) enclose the Glutamine amidotransferase type-1 domain. Cysteine 86 serves as the catalytic Nucleophile. Catalysis depends on residues histidine 181 and glutamate 183. Residues 208 to 400 (WTPAKIIDDA…LGLPYNMLYR (193 aa)) form the GMPS ATP-PPase domain. 235–241 (SGGVDSS) provides a ligand contact to ATP.

In terms of assembly, homodimer.

The enzyme catalyses XMP + L-glutamine + ATP + H2O = GMP + L-glutamate + AMP + diphosphate + 2 H(+). The protein operates within purine metabolism; GMP biosynthesis; GMP from XMP (L-Gln route): step 1/1. Catalyzes the synthesis of GMP from XMP. This is GMP synthase [glutamine-hydrolyzing] from Pectobacterium atrosepticum (strain SCRI 1043 / ATCC BAA-672) (Erwinia carotovora subsp. atroseptica).